The following is a 156-amino-acid chain: Oxidized purine nucleoside triphosphate hydrolase (156 aa).

The Nudix hydrolase domain maps to 3 to 132; it reads TSKLLTLVLV…WFPLMLQKKR (130 aa). Threonine 8 is a binding site for 2-oxo-dATP. O(6)-methyl-dGMP-binding positions include threonine 8, lysine 23, asparagine 33, and 35–38; that span reads FGGK. Lysine 23 lines the 8-oxo-dGTP pocket. 2-oxo-dATP contacts are provided by residues asparagine 33 and 35–38; that span reads FGGK. Residues glycine 36, glutamate 52, glutamate 55, glutamate 56, and glutamate 100 each coordinate Mg(2+). The short motif at 37 to 58 is the Nudix box element; it reads GKVQTGETIEQAARRELLEESG. 2-oxo-dATP is bound at residue 117 to 120; the sequence is WADD. An O(6)-methyl-dGMP-binding site is contributed by 117–120; sequence WADD.

Belongs to the Nudix hydrolase family. As to quaternary structure, monomer. The cofactor is Mg(2+).

The protein localises to the cytoplasm. It is found in the cytosol. The protein resides in the mitochondrion matrix. It localises to the nucleus. It catalyses the reaction 2-oxo-dATP + H2O = 2-oxo-dAMP + diphosphate + H(+). The enzyme catalyses 2-oxo-ATP + H2O = 2-oxo-AMP + diphosphate + H(+). The catalysed reaction is 8-oxo-dGTP + H2O = 8-oxo-dGMP + diphosphate + H(+). It carries out the reaction 8-oxo-dATP + H2O = 8-oxo-dAMP + diphosphate + H(+). It catalyses the reaction O(6)-methyl-dGTP + H2O = O(6)-methyl-dGMP + diphosphate + H(+). The enzyme catalyses N(6)-methyl-dATP + H2O = N(6)-methyl-dAMP + diphosphate + H(+). The catalysed reaction is N(6)-methyl-ATP + H2O = N(6)-methyl-AMP + diphosphate + H(+). With respect to regulation, inhibited by TH588. Oxidized purine nucleoside triphosphate hydrolase which is a prominent sanitizer of the oxidized nucleotide pool. Catalyzes the hydrolysis of 2-oxo-dATP (2-hydroxy-dATP) into 2-oxo-dAMP. Also has a significant hydrolase activity toward 2-oxo-ATP, 8-oxo-dGTP and 8-oxo-dATP. Through the hydrolysis of oxidized purine nucleoside triphosphates, prevents their incorporation into DNA and the subsequent transversions A:T to C:G and G:C to T:A. Also catalyzes the hydrolysis of methylated purine nucleoside triphosphate preventing their integration into DNA. Through this antimutagenic activity protects cells from oxidative stress. This chain is Oxidized purine nucleoside triphosphate hydrolase (nudt1), found in Danio rerio (Zebrafish).